We begin with the raw amino-acid sequence, 699 residues long: eEF1A lysine and N-terminal methyltransferase (699 aa).

Met1 bears the N-acetylmethionine mark. The residue at position 267 (Ser267) is a Phosphoserine. The disordered stretch occupies residues 433 to 460; that stretch reads VSHRAQKKRKKDRKKHRPADTPEDLPAA. Over residues 436–449 the composition is skewed to basic residues; the sequence is RAQKKRKKDRKKHR.

Belongs to the methyltransferase superfamily. In terms of assembly, forms a tripartite complex containing GAB1, METTL13 and SPRY2. Within the complex interacts with GAB1 and SPRY2.

The protein localises to the cytoplasm. It localises to the nucleus. It is found in the mitochondrion. It catalyses the reaction L-lysyl-[protein] + S-adenosyl-L-methionine = N(6)-methyl-L-lysyl-[protein] + S-adenosyl-L-homocysteine + H(+). It carries out the reaction N(6)-methyl-L-lysyl-[protein] + S-adenosyl-L-methionine = N(6),N(6)-dimethyl-L-lysyl-[protein] + S-adenosyl-L-homocysteine + H(+). The enzyme catalyses N-terminal glycyl-L-lysyl-L-glutamyl-[protein] + 3 S-adenosyl-L-methionine = N-terminal N,N,N-trimethyl-glycyl-L-lysyl-L-glutamyl-[protein] + 3 S-adenosyl-L-homocysteine + 3 H(+). In terms of biological role, dual methyltransferase that catalyzes methylation of elongation factor 1-alpha (EEF1A1 and EEF1A2) at two different positions, and is therefore involved in the regulation of mRNA translation. Via its C-terminus, methylates EEF1A1 and EEF1A2 at the N-terminal residue 'Gly-2'. Via its N-terminus dimethylates EEF1A1 and EEF1A2 at residue 'Lys-55'. Has no activity towards core histones H2A, H2B, H3 and H4. This Bos taurus (Bovine) protein is eEF1A lysine and N-terminal methyltransferase (METTL13).